Reading from the N-terminus, the 503-residue chain is Envelope glycoprotein p57 (503 aa).

The N-terminal stretch at 1–22 (MQLSMSFLIGFGTLVLALSART) is a signal peptide. Over 23–467 (FDLQGLSCNT…FLNPLGWLRD (445 aa)) the chain is Extracellular. N-linked (GlcNAc...) asparagine; by host glycosylation is found at Asn63, Asn109, Asn139, Asn192, Asn196, Asn202, Asn221, Asn230, and Asn235. The fusion peptide stretch occupies residues 274-315 (ILQSLLLGVFGTGIASASQFLRGWLNHPDIIGYIVNGVGVVW). Asn321, Asn328, Asn388, and Asn438 each carry an N-linked (GlcNAc...) asparagine; by host glycan. Residues 468 to 488 (LLAWAAWLGGVLYLISLCVSL) traverse the membrane as a helical segment. Topologically, residues 489–503 (PASFARRRRLGRWQE) are cytoplasmic.

Post-translationally, glycosated; Stabilizes it. A portion of p57 is cleaved into p27 and p29. p27 and p29 are called gp43 when glycosylated, as they seem to have the same molecular weight.

The protein resides in the host endoplasmic reticulum membrane. It localises to the virion. The protein localises to the host cell membrane. Unprocessed envelope protein p57 is thought to be involved in attachment of the virus to its cell surface receptor. This attachment induces virion internalization predominantly through clathrin-dependent endocytosis. Functionally, envelope protein p27 and p29 presumably linked by disulfide bond are the viral type II fusion protein, involved in pH-dependent fusion within early endosomes after internalization of the virion by endocytosis. This Borna disease virus 1 (BoDV-1) protein is Envelope glycoprotein p57 (G).